Reading from the N-terminus, the 734-residue chain is Serine protease FAM111B (734 aa).

M1 is subject to N-acetylmethionine. Basic and acidic residues-rich tracts occupy residues 1–10 and 17–32; these read MNSMKTEENK and DDQRTRPEVSKDTVMK. The interval 1 to 32 is disordered; that stretch reads MNSMKTEENKSFSAMEDDQRTRPEVSKDTVMK. K284 is covalently cross-linked (Glycyl lysine isopeptide (Lys-Gly) (interchain with G-Cter in SUMO2)). The disordered stretch occupies residues 285–321; that stretch reads QNESATDEINHQSLIQSKKKVHKPKKDGETKDVEHSR. The segment covering 310–321 has biased composition (basic and acidic residues); the sequence is KDGETKDVEHSR. Residues H490, D544, and S650 each act as charge relay system in the active site. Residues 712-734 form a disordered region; it reads TYDEEKGKQESSLQDHQIEPMEC.

This sequence belongs to the FAM111 family. Widely expressed.

Serine protease. In Homo sapiens (Human), this protein is Serine protease FAM111B.